The primary structure comprises 249 residues: DnaJ homolog subfamily C member 5 homolog (249 aa).

At serine 12 the chain carries Phosphoserine. Phosphothreonine is present on threonine 13. A phosphoserine mark is found at serine 14 and serine 17. Residues 15-84 (GDSLYEILGL…RNIYDNYGSL (70 aa)) form the J domain. At tyrosine 19 the chain carries Phosphotyrosine. Positions 146–162 (HDQYSHLNRPDGNREGN) are enriched in basic and acidic residues. Disordered regions lie at residues 146–177 (HDQYSHLNRPDGNREGNDMPTHLGQPPRLEDV) and 218–249 (PFTGAPVAANENTSLNTTEQTTYTPDMVNQKY). The segment covering 227–241 (NENTSLNTTEQTTYT) has biased composition (polar residues).

Fatty acylated. Heavily palmitoylated in the cysteine string motif. In terms of tissue distribution, expressed in wide range of synaptic terminals: embryonic nervous system, larval neuromuscular junctions, adult visual system (neuropil of optic ganglia and terminal of R1-8 photoreceptors) and thoracic neuromuscular junctions. Also expressed in non-neuronal cells: follicle cells, spermatheca, testis and ejaculatory bulb. Low level of expression is found in many neuronal and non-neuronal tissues.

The protein localises to the membrane. In terms of biological role, may have an important role in presynaptic function. The protein is DnaJ homolog subfamily C member 5 homolog of Drosophila melanogaster (Fruit fly).